Consider the following 423-residue polypeptide: F-box protein At1g52495 (423 aa).

The 47-residue stretch at 49–95 folds into the F-box domain; sequence KLKDVHLPLDLIVEILKKLPTKSLMRFRCVSKPWSFIISKRRDFVES.

This chain is F-box protein At1g52495, found in Arabidopsis thaliana (Mouse-ear cress).